A 627-amino-acid polypeptide reads, in one-letter code: tRNA uridine 5-carboxymethylaminomethyl modification enzyme MnmG (627 aa).

FAD-binding positions include 13-18 (GGGHAG), V125, and S180. 274 to 288 (GPRYCPSIEDKVVRF) provides a ligand contact to NAD(+). FAD is bound at residue Q371.

The protein belongs to the MnmG family. As to quaternary structure, homodimer. Heterotetramer of two MnmE and two MnmG subunits. It depends on FAD as a cofactor.

It localises to the cytoplasm. Functionally, NAD-binding protein involved in the addition of a carboxymethylaminomethyl (cmnm) group at the wobble position (U34) of certain tRNAs, forming tRNA-cmnm(5)s(2)U34. This chain is tRNA uridine 5-carboxymethylaminomethyl modification enzyme MnmG, found in Francisella tularensis subsp. tularensis (strain WY96-3418).